A 204-amino-acid chain; its full sequence is Methylthioribulose-1-phosphate dehydratase (204 aa).

Zn(2+) contacts are provided by H94 and H96.

It belongs to the aldolase class II family. MtnB subfamily. It depends on Zn(2+) as a cofactor.

The catalysed reaction is 5-(methylsulfanyl)-D-ribulose 1-phosphate = 5-methylsulfanyl-2,3-dioxopentyl phosphate + H2O. It participates in amino-acid biosynthesis; L-methionine biosynthesis via salvage pathway; L-methionine from S-methyl-5-thio-alpha-D-ribose 1-phosphate: step 2/6. In terms of biological role, catalyzes the dehydration of methylthioribulose-1-phosphate (MTRu-1-P) into 2,3-diketo-5-methylthiopentyl-1-phosphate (DK-MTP-1-P). The chain is Methylthioribulose-1-phosphate dehydratase from Enterobacter sp. (strain 638).